The chain runs to 464 residues: ATP synthase subunit beta (464 aa).

153 to 160 lines the ATP pocket; the sequence is GGAGVGKT.

Belongs to the ATPase alpha/beta chains family. As to quaternary structure, F-type ATPases have 2 components, CF(1) - the catalytic core - and CF(0) - the membrane proton channel. CF(1) has five subunits: alpha(3), beta(3), gamma(1), delta(1), epsilon(1). CF(0) has three main subunits: a(1), b(2) and c(9-12). The alpha and beta chains form an alternating ring which encloses part of the gamma chain. CF(1) is attached to CF(0) by a central stalk formed by the gamma and epsilon chains, while a peripheral stalk is formed by the delta and b chains.

It is found in the cell membrane. It carries out the reaction ATP + H2O + 4 H(+)(in) = ADP + phosphate + 5 H(+)(out). Its function is as follows. Produces ATP from ADP in the presence of a proton gradient across the membrane. The catalytic sites are hosted primarily by the beta subunits. In Alkaliphilus oremlandii (strain OhILAs) (Clostridium oremlandii (strain OhILAs)), this protein is ATP synthase subunit beta.